A 321-amino-acid polypeptide reads, in one-letter code: Ribonucleoside-diphosphate reductase small subunit (321 aa).

D78, E108, and H111 together coordinate Fe cation. Y115 is an active-site residue. The chain crosses the membrane as a helical span at residues 165 to 185 (ILMILIEGLFFASSFASIAYL). Positions 171, 205, and 208 each coordinate Fe cation.

This sequence belongs to the ribonucleoside diphosphate reductase small chain family. In terms of assembly, heterotetramer composed of a homodimer of the large subunit (R1) and a homodimer of the small subunit (R2). Larger multisubunit protein complex are also active, composed of (R1)n(R2)n. It depends on Fe cation as a cofactor.

It is found in the host membrane. It catalyses the reaction a 2'-deoxyribonucleoside 5'-diphosphate + [thioredoxin]-disulfide + H2O = a ribonucleoside 5'-diphosphate + [thioredoxin]-dithiol. Its function is as follows. Ribonucleoside-diphosphate reductase holoenzyme provides the precursors necessary for viral DNA synthesis. Allows virus growth in non-dividing cells, as well as reactivation from latency in infected hosts. Catalyzes the biosynthesis of deoxyribonucleotides from the corresponding ribonucleotides. The polypeptide is Ribonucleoside-diphosphate reductase small subunit (Equus caballus (Horse)).